A 944-amino-acid polypeptide reads, in one-letter code: Translation initiation factor IF-2 (944 aa).

The segment at 61-281 (IQANQPAKNP…TAKNNKSHKI (221 aa)) is disordered. Residues 132 to 150 (TFENQTPPTENTPKVVSHS) show a composition bias toward polar residues. Basic and acidic residues predominate over residues 151–169 (QIEKAKQKLQEIQKSREAL). Residues 175-185 (SNANNASNTNN) are compositionally biased toward low complexity. Positions 186-203 (AKKEISEVKKQEQEIKRH) are enriched in basic and acidic residues. Positions 204-215 (ENIKRRTGFRVI) are enriched in basic residues. Basic and acidic residues predominate over residues 244–259 (EDIKKEWQEKDKQEAK). Residues 443-612 (ERPPVVTIMG…LIQADIMELK (170 aa)) enclose the tr-type G domain. The tract at residues 452-459 (GHVDHGKT) is G1. 452-459 (GHVDHGKT) contributes to the GTP binding site. A G2 region spans residues 477–481 (GITQH). The G3 stretch occupies residues 498 to 501 (DTPG). Residues 498-502 (DTPGH) and 552-555 (NKMD) contribute to the GTP site. The segment at 552 to 555 (NKMD) is G4. A G5 region spans residues 588-590 (SAK).

Belongs to the TRAFAC class translation factor GTPase superfamily. Classic translation factor GTPase family. IF-2 subfamily.

It is found in the cytoplasm. Its function is as follows. One of the essential components for the initiation of protein synthesis. Protects formylmethionyl-tRNA from spontaneous hydrolysis and promotes its binding to the 30S ribosomal subunits. Also involved in the hydrolysis of GTP during the formation of the 70S ribosomal complex. The sequence is that of Translation initiation factor IF-2 from Helicobacter pylori (strain HPAG1).